The sequence spans 123 residues: Large ribosomal subunit protein uL14 (123 aa).

Belongs to the universal ribosomal protein uL14 family. Part of the 50S ribosomal subunit. Forms a cluster with proteins L3 and L19. In the 70S ribosome, L14 and L19 interact and together make contacts with the 16S rRNA in bridges B5 and B8.

Its function is as follows. Binds to 23S rRNA. Forms part of two intersubunit bridges in the 70S ribosome. The chain is Large ribosomal subunit protein uL14 from Escherichia coli O6:K15:H31 (strain 536 / UPEC).